Here is a 283-residue protein sequence, read N- to C-terminus: Biotin synthase (283 aa).

Residues 3–232 (KISNEIFLCS…NTRLMIAGGR (230 aa)) form the Radical SAM core domain. Positions 21, 25, and 28 each coordinate [4Fe-4S] cluster. Residues Cys65, Cys100, and Arg225 each contribute to the [2Fe-2S] cluster site.

The protein belongs to the radical SAM superfamily. Biotin synthase family. As to quaternary structure, homodimer. [4Fe-4S] cluster serves as cofactor. Requires [2Fe-2S] cluster as cofactor.

The enzyme catalyses (4R,5S)-dethiobiotin + (sulfur carrier)-SH + 2 reduced [2Fe-2S]-[ferredoxin] + 2 S-adenosyl-L-methionine = (sulfur carrier)-H + biotin + 2 5'-deoxyadenosine + 2 L-methionine + 2 oxidized [2Fe-2S]-[ferredoxin]. It functions in the pathway cofactor biosynthesis; biotin biosynthesis; biotin from 7,8-diaminononanoate: step 2/2. Functionally, catalyzes the conversion of dethiobiotin (DTB) to biotin by the insertion of a sulfur atom into dethiobiotin via a radical-based mechanism. This chain is Biotin synthase, found in Helicobacter hepaticus (strain ATCC 51449 / 3B1).